Here is a 270-residue protein sequence, read N- to C-terminus: Orotidine 5'-phosphate decarboxylase (270 aa).

Residues Asp39, 61–63, 93–102, Tyr221, and Arg239 contribute to the substrate site; these read KTH and DRKFADIGNT. Lys95 functions as the Proton donor in the catalytic mechanism.

It belongs to the OMP decarboxylase family.

It carries out the reaction orotidine 5'-phosphate + H(+) = UMP + CO2. Its pathway is pyrimidine metabolism; UMP biosynthesis via de novo pathway; UMP from orotate: step 2/2. The chain is Orotidine 5'-phosphate decarboxylase (URA3) from Candida dubliniensis (strain CD36 / ATCC MYA-646 / CBS 7987 / NCPF 3949 / NRRL Y-17841) (Yeast).